A 492-amino-acid polypeptide reads, in one-letter code: Glutamyl-tRNA(Gln) amidotransferase subunit A (492 aa).

Active-site charge relay system residues include Lys79 and Ser154. The active-site Acyl-ester intermediate is Ser178.

It belongs to the amidase family. GatA subfamily. As to quaternary structure, heterotrimer of A, B and C subunits.

The enzyme catalyses L-glutamyl-tRNA(Gln) + L-glutamine + ATP + H2O = L-glutaminyl-tRNA(Gln) + L-glutamate + ADP + phosphate + H(+). Its function is as follows. Allows the formation of correctly charged Gln-tRNA(Gln) through the transamidation of misacylated Glu-tRNA(Gln) in organisms which lack glutaminyl-tRNA synthetase. The reaction takes place in the presence of glutamine and ATP through an activated gamma-phospho-Glu-tRNA(Gln). The sequence is that of Glutamyl-tRNA(Gln) amidotransferase subunit A (gatA) from Moraxella catarrhalis (Branhamella catarrhalis).